The following is a 595-amino-acid chain: Aspartate--tRNA(Asp/Asn) ligase (595 aa).

Position 175 (E175) interacts with L-aspartate. An aspartate region spans residues 199–202 (QQYK). Residues R221 and H454 each coordinate L-aspartate. 221-223 (RDE) is an ATP binding site. E488 is an ATP binding site. R495 serves as a coordination point for L-aspartate. An ATP-binding site is contributed by 540 to 543 (GIDR).

It belongs to the class-II aminoacyl-tRNA synthetase family. Type 1 subfamily. In terms of assembly, homodimer.

The protein resides in the cytoplasm. The enzyme catalyses tRNA(Asx) + L-aspartate + ATP = L-aspartyl-tRNA(Asx) + AMP + diphosphate. Aspartyl-tRNA synthetase with relaxed tRNA specificity since it is able to aspartylate not only its cognate tRNA(Asp) but also tRNA(Asn). Reaction proceeds in two steps: L-aspartate is first activated by ATP to form Asp-AMP and then transferred to the acceptor end of tRNA(Asp/Asn). The sequence is that of Aspartate--tRNA(Asp/Asn) ligase from Brucella canis (strain ATCC 23365 / NCTC 10854 / RM-666).